We begin with the raw amino-acid sequence, 156 residues long: Small ribosomal subunit protein uS7 (156 aa).

This sequence belongs to the universal ribosomal protein uS7 family. As to quaternary structure, part of the 30S ribosomal subunit. Contacts proteins S9 and S11.

One of the primary rRNA binding proteins, it binds directly to 16S rRNA where it nucleates assembly of the head domain of the 30S subunit. Is located at the subunit interface close to the decoding center, probably blocks exit of the E-site tRNA. This is Small ribosomal subunit protein uS7 from Leptothrix cholodnii (strain ATCC 51168 / LMG 8142 / SP-6) (Leptothrix discophora (strain SP-6)).